Consider the following 228-residue polypeptide: Ribose-5-phosphate isomerase A (228 aa).

Substrate contacts are provided by residues 26 to 29, 81 to 84, and 94 to 97; these read SGST, DGAD, and KGGG. Residue Glu103 is the Proton acceptor of the active site. Lys121 provides a ligand contact to substrate.

This sequence belongs to the ribose 5-phosphate isomerase family. In terms of assembly, homodimer.

The enzyme catalyses aldehydo-D-ribose 5-phosphate = D-ribulose 5-phosphate. The protein operates within carbohydrate degradation; pentose phosphate pathway; D-ribose 5-phosphate from D-ribulose 5-phosphate (non-oxidative stage): step 1/1. In terms of biological role, catalyzes the reversible conversion of ribose-5-phosphate to ribulose 5-phosphate. In Shouchella clausii (strain KSM-K16) (Alkalihalobacillus clausii), this protein is Ribose-5-phosphate isomerase A.